The primary structure comprises 160 residues: Putative pre-16S rRNA nuclease (160 aa).

Belongs to the YqgF nuclease family.

The protein resides in the cytoplasm. In terms of biological role, could be a nuclease involved in processing of the 5'-end of pre-16S rRNA. The protein is Putative pre-16S rRNA nuclease of Rhodopseudomonas palustris (strain ATCC BAA-98 / CGA009).